Consider the following 440-residue polypeptide: Gap junction alpha-8 protein (440 aa).

Residues 2–12 (GDWSFLGNILE) lie within the membrane without spanning it. The Cytoplasmic segment spans residues 13 to 21 (EVNEHSTVI). A helical membrane pass occupies residues 22–42 (GRVWLTVLFIFRILILGTAAE). Topologically, residues 43 to 71 (FVWGDEQSDFVCNTQQPGCENVCYDEAFP) are extracellular. Cystine bridges form between Cys-54–Cys-201, Cys-61–Cys-195, and Cys-65–Cys-190. The chain crosses the membrane as a helical span at residues 72–92 (ISHIRLWVLQIIFVSTPSLVY). Over 93 to 161 (VGHAVHHVRM…GTLLRTYVCH (69 aa)) the chain is Cytoplasmic. A disordered region spans residues 108–144 (EREAEELSQQSPGNGGERAPLAADQGSVKKSSSSSKG). The helical transmembrane segment at 162–182 (IIFKTLFEVGFIVGHYFLYGF) threads the bilayer. The Extracellular portion of the chain corresponds to 183–210 (RILPLYRCSRWPCPNVVDCFVSRPTEKT). The helical transmembrane segment at 211 to 231 (IFILFMLSVASVSLFLNILEM) threads the bilayer. At 232-440 (SHLGLKKIRS…SRARSDDLTV (209 aa)) the chain is on the cytoplasmic side. The tract at residues 334-440 (GAQEGVEEEQ…SRARSDDLTV (107 aa)) is disordered. Basic and acidic residues-rich tracts occupy residues 353–365 (VGDKSQEAERVST) and 375–405 (EEEKVEPPEVEKEAEKEETPPEKVSKQELTP). The span at 423–432 (LSRLSKASSR) shows a compositional bias: low complexity.

The protein belongs to the connexin family. Alpha-type (group II) subfamily. As to quaternary structure, a hemichannel or connexon is composed of a hexamer of connexins. A functional gap junction is formed by the apposition of two hemichannels. Forms heteromeric channels with GJA3. In terms of tissue distribution, detected in eye lens (at protein level). Eye lens.

Its subcellular location is the cell membrane. It is found in the cell junction. The protein localises to the gap junction. Its function is as follows. Structural component of eye lens gap junctions. Gap junctions are dodecameric channels that connect the cytoplasm of adjoining cells. They are formed by the docking of two hexameric hemichannels, one from each cell membrane. Small molecules and ions diffuse from one cell to a neighboring cell via the central pore. The chain is Gap junction alpha-8 protein (GJA8) from Ovis aries (Sheep).